A 235-amino-acid polypeptide reads, in one-letter code: Orotidine 5'-phosphate decarboxylase (235 aa).

Substrate-binding positions include aspartate 12, lysine 34, 61 to 70, threonine 116, arginine 177, glutamine 186, glycine 206, and arginine 207; that span reads DMKLLDIDNT. Lysine 63 acts as the Proton donor in catalysis.

This sequence belongs to the OMP decarboxylase family. Type 1 subfamily. Homodimer.

It catalyses the reaction orotidine 5'-phosphate + H(+) = UMP + CO2. It functions in the pathway pyrimidine metabolism; UMP biosynthesis via de novo pathway; UMP from orotate: step 2/2. Catalyzes the decarboxylation of orotidine 5'-monophosphate (OMP) to uridine 5'-monophosphate (UMP). This is Orotidine 5'-phosphate decarboxylase from Rhizobium etli (strain ATCC 51251 / DSM 11541 / JCM 21823 / NBRC 15573 / CFN 42).